A 410-amino-acid chain; its full sequence is Translation initiation factor 2 subunit gamma (410 aa).

One can recognise a tr-type G domain in the interval 6–203 (QSEVNIGMVG…AIQEFIPTPK (198 aa)). The segment at 15–22 (GHVDHGKT) is G1. Aspartate 18, threonine 22, glycine 43, and serine 45 together coordinate Mg(2+). 18 to 23 (DHGKTS) contributes to the GTP binding site. Residues 43–47 (GISIR) form a G2 region. Cysteine 58, cysteine 61, cysteine 73, and cysteine 76 together coordinate Zn(2+). The interval 90-93 (DAPG) is G3. Residues 146–149 (NKID) and 181–183 (SAH) contribute to the GTP site. The interval 146 to 149 (NKID) is G4. The segment at 181 to 183 (SAH) is G5.

The protein belongs to the TRAFAC class translation factor GTPase superfamily. Classic translation factor GTPase family. EIF2G subfamily. In terms of assembly, heterotrimer composed of an alpha, a beta and a gamma chain. Mg(2+) is required as a cofactor.

It carries out the reaction GTP + H2O = GDP + phosphate + H(+). Its function is as follows. eIF-2 functions in the early steps of protein synthesis by forming a ternary complex with GTP and initiator tRNA. The chain is Translation initiation factor 2 subunit gamma from Methanococcus vannielii (strain ATCC 35089 / DSM 1224 / JCM 13029 / OCM 148 / SB).